The following is a 143-amino-acid chain: Large ribosomal subunit protein uL15 (143 aa).

Residues 1–59 (MELNTITPGQGAKHAKRRVGRGIGSGLGKTAGRGHKGQKSRSGGYHKVGFEGGQMPMQR) form a disordered region. Gly residues predominate over residues 21-31 (RGIGSGLGKTA).

Belongs to the universal ribosomal protein uL15 family. Part of the 50S ribosomal subunit.

Functionally, binds to the 23S rRNA. The protein is Large ribosomal subunit protein uL15 of Polaromonas naphthalenivorans (strain CJ2).